Consider the following 398-residue polypeptide: Peptidyl-prolyl cis-trans isomerase D (398 aa).

The PPIase cyclophilin-type domain occupies 21–185 (FGSSPASRPG…EDVKIVDCGE (165 aa)). TPR repeat units lie at residues 229–262 (GLALKNMANTQFSKANFDIALEKYSKALRYLQLH), 282–323 (TSIQ…PSTE), and 335–368 (AKAFYRRASAYVAQKDDERAEADLKHALENAPED).

Belongs to the cyclophilin-type PPIase family. PPIase D subfamily.

The protein resides in the cytoplasm. The enzyme catalyses [protein]-peptidylproline (omega=180) = [protein]-peptidylproline (omega=0). Functionally, PPIases accelerate the folding of proteins. It catalyzes the cis-trans isomerization of proline imidic peptide bonds in oligopeptides. The protein is Peptidyl-prolyl cis-trans isomerase D (CPR6) of Mycosarcoma maydis (Corn smut fungus).